Here is a 134-residue protein sequence, read N- to C-terminus: Mini-ribonuclease 3 (134 aa).

Aspartate 23 is a catalytic residue.

This sequence belongs to the MrnC RNase family. In terms of assembly, homodimer. Mg(2+) serves as cofactor.

It is found in the cytoplasm. Involved in correct processing of both the 5' and 3' ends of 23S rRNA precursor. Processes 30S rRNA precursor transcript even in absence of ribonuclease 3 (Rnc); Rnc processes 30S rRNA into smaller rRNA precursors. In Brevibacillus brevis (strain 47 / JCM 6285 / NBRC 100599), this protein is Mini-ribonuclease 3.